The chain runs to 352 residues: Putative [LysW]-L-2-aminoadipate/[LysW]-L-glutamate phosphate reductase (352 aa).

NADP(+)-binding positions include 10-13 (SGFT) and 34-36 (SRK). The active site involves Cys151. Asn319 lines the NADP(+) pocket.

The protein belongs to the NAGSA dehydrogenase family. Type 1 subfamily. LysY sub-subfamily.

Its subcellular location is the cytoplasm. The enzyme catalyses [amino-group carrier protein]-C-terminal-N-(1-carboxy-5-oxopentan-1-yl)-L-glutamine + phosphate + NADP(+) = [amino-group carrier protein]-C-terminal-N-(1-carboxy-5-phosphooxy-5-oxopentan-1-yl)-L-glutamine + NADPH + H(+). It carries out the reaction [amino-group carrier protein]-C-terminal-gamma-(L-glutamyl-5-semialdehyde)-L-glutamate + phosphate + NADP(+) = [amino-group carrier protein]-C-terminal-gamma-(5-phospho-L-glutamyl)-L-glutamate + NADPH + H(+). The protein operates within amino-acid biosynthesis; L-lysine biosynthesis via AAA pathway; L-lysine from L-alpha-aminoadipate (Thermus route): step 3/5. Its pathway is amino-acid biosynthesis; L-arginine biosynthesis. Involved in both the arginine and lysine biosynthetic pathways. The sequence is that of Putative [LysW]-L-2-aminoadipate/[LysW]-L-glutamate phosphate reductase from Pyrobaculum neutrophilum (strain DSM 2338 / JCM 9278 / NBRC 100436 / V24Sta) (Thermoproteus neutrophilus).